Here is a 124-residue protein sequence, read N- to C-terminus: Heat-labile enterotoxin B chain (124 aa).

The first 21 residues, 1 to 21 (MNKVKFYVLFTALLSSLCAHG), serve as a signal peptide directing secretion. C30 and C107 are disulfide-bonded.

Heterohexamer of one A chain and of five B chains.

Functionally, the biological activity of the toxin is produced by the A chain, which activates intracellular adenyl cyclase. This chain is Heat-labile enterotoxin B chain (eltB), found in Escherichia coli.